Reading from the N-terminus, the 432-residue chain is NADH-quinone oxidoreductase subunit D (432 aa).

The protein belongs to the complex I 49 kDa subunit family. As to quaternary structure, NDH-1 is composed of 14 different subunits. Subunits NuoB, C, D, E, F, and G constitute the peripheral sector of the complex.

It is found in the cell membrane. The catalysed reaction is a quinone + NADH + 5 H(+)(in) = a quinol + NAD(+) + 4 H(+)(out). Functionally, NDH-1 shuttles electrons from NADH, via FMN and iron-sulfur (Fe-S) centers, to quinones in the respiratory chain. The immediate electron acceptor for the enzyme in this species is believed to be a menaquinone. Couples the redox reaction to proton translocation (for every two electrons transferred, four hydrogen ions are translocated across the cytoplasmic membrane), and thus conserves the redox energy in a proton gradient. The sequence is that of NADH-quinone oxidoreductase subunit D from Mycobacterium marinum (strain ATCC BAA-535 / M).